Here is a 113-residue protein sequence, read N- to C-terminus: Protein Asterix (113 aa).

The helical transmembrane segment at 81–97 (IVSSFMLSVSAVVMSYL) threads the bilayer.

It belongs to the Asterix family.

Its subcellular location is the membrane. This chain is Protein Asterix, found in Caenorhabditis elegans.